A 103-amino-acid chain; its full sequence is MYAVFQSGGKQHRVSEGHVVRLEKLELATGSTVEFDSVLMIVNGEDIKIGTPVVTGAKVVAEVVSQGRGEKVKIVKFRRRKHSRKQQGHRQWFTEVKITGIQA.

This sequence belongs to the bacterial ribosomal protein bL21 family. Part of the 50S ribosomal subunit. Contacts protein L20.

In terms of biological role, this protein binds to 23S rRNA in the presence of protein L20. This is Large ribosomal subunit protein bL21 from Histophilus somni (strain 129Pt) (Haemophilus somnus).